Here is a 114-residue protein sequence, read N- to C-terminus: Thioredoxin H1 (114 aa).

Position 2 is an N-acetylalanine (alanine 2). The 113-residue stretch at 2-114 (ASEEGQVIAC…LQSTIAKHLA (113 aa)) folds into the Thioredoxin domain. Active-site nucleophile residues include cysteine 40 and cysteine 43. Cysteines 40 and 43 form a disulfide.

This sequence belongs to the thioredoxin family. Plant H-type subfamily. As to quaternary structure, interacts with FBA6. Interacts with MDH1.

The protein localises to the cytoplasm. Its function is as follows. Thiol-disulfide oxidoreductase involved in the redox regulation of a number of cytosolic enzymes. Activates the cytosolic malate dehydrogenase (MDH) probably by reducing an interchain disulfide bond of the inactive MDH homodimer. Possesses insulin disulfide bonds reducing activity. This chain is Thioredoxin H1 (TRX1), found in Arabidopsis thaliana (Mouse-ear cress).